Here is a 253-residue protein sequence, read N- to C-terminus: Tryptophan synthase alpha chain (253 aa).

Active-site proton acceptor residues include E46 and D57.

It belongs to the TrpA family. Tetramer of two alpha and two beta chains.

The catalysed reaction is (1S,2R)-1-C-(indol-3-yl)glycerol 3-phosphate + L-serine = D-glyceraldehyde 3-phosphate + L-tryptophan + H2O. It participates in amino-acid biosynthesis; L-tryptophan biosynthesis; L-tryptophan from chorismate: step 5/5. Functionally, the alpha subunit is responsible for the aldol cleavage of indoleglycerol phosphate to indole and glyceraldehyde 3-phosphate. This is Tryptophan synthase alpha chain from Dictyoglomus turgidum (strain DSM 6724 / Z-1310).